A 212-amino-acid polypeptide reads, in one-letter code: Peptide methionine sulfoxide reductase MsrA (212 aa).

The active site involves cysteine 52.

This sequence belongs to the MsrA Met sulfoxide reductase family.

The enzyme catalyses L-methionyl-[protein] + [thioredoxin]-disulfide + H2O = L-methionyl-(S)-S-oxide-[protein] + [thioredoxin]-dithiol. It catalyses the reaction [thioredoxin]-disulfide + L-methionine + H2O = L-methionine (S)-S-oxide + [thioredoxin]-dithiol. Its function is as follows. Has an important function as a repair enzyme for proteins that have been inactivated by oxidation. Catalyzes the reversible oxidation-reduction of methionine sulfoxide in proteins to methionine. This chain is Peptide methionine sulfoxide reductase MsrA, found in Shigella boydii serotype 18 (strain CDC 3083-94 / BS512).